The chain runs to 428 residues: Elongation factor 1-alpha (428 aa).

The region spanning 5–217 (KPHVNIVFIG…DQIPEPEKPV (213 aa)) is the tr-type G domain. The G1 stretch occupies residues 14–21 (GHVDHGKS). Residue 14–21 (GHVDHGKS) coordinates GTP. Serine 21 is a Mg(2+) binding site. The tract at residues 68-72 (GITID) is G2. The tract at residues 89–92 (DAPG) is G3. GTP-binding positions include 89-93 (DAPGH) and 144-147 (NKMD). Residues 144 to 147 (NKMD) form a G4 region. A G5 region spans residues 181–183 (SAW).

It belongs to the TRAFAC class translation factor GTPase superfamily. Classic translation factor GTPase family. EF-Tu/EF-1A subfamily.

It localises to the cytoplasm. The enzyme catalyses GTP + H2O = GDP + phosphate + H(+). GTP hydrolase that promotes the GTP-dependent binding of aminoacyl-tRNA to the A-site of ribosomes during protein biosynthesis. The protein is Elongation factor 1-alpha of Pyrococcus furiosus (strain ATCC 43587 / DSM 3638 / JCM 8422 / Vc1).